A 339-amino-acid chain; its full sequence is Biotin synthase (339 aa).

Residues 53–271 enclose the Radical SAM core domain; that stretch reads NAIQMSRLLS…IALARILMPR (219 aa). [4Fe-4S] cluster contacts are provided by Cys-68, Cys-72, and Cys-75. Residues Cys-112, Cys-143, Cys-203, and Arg-275 each contribute to the [2Fe-2S] cluster site.

It belongs to the radical SAM superfamily. Biotin synthase family. Homodimer. [4Fe-4S] cluster serves as cofactor. Requires [2Fe-2S] cluster as cofactor.

It catalyses the reaction (4R,5S)-dethiobiotin + (sulfur carrier)-SH + 2 reduced [2Fe-2S]-[ferredoxin] + 2 S-adenosyl-L-methionine = (sulfur carrier)-H + biotin + 2 5'-deoxyadenosine + 2 L-methionine + 2 oxidized [2Fe-2S]-[ferredoxin]. Its pathway is cofactor biosynthesis; biotin biosynthesis; biotin from 7,8-diaminononanoate: step 2/2. Functionally, catalyzes the conversion of dethiobiotin (DTB) to biotin by the insertion of a sulfur atom into dethiobiotin via a radical-based mechanism. This is Biotin synthase from Agrobacterium fabrum (strain C58 / ATCC 33970) (Agrobacterium tumefaciens (strain C58)).